A 344-amino-acid polypeptide reads, in one-letter code: Phenylalanine--tRNA ligase alpha subunit (344 aa).

Glu255 contacts Mg(2+).

It belongs to the class-II aminoacyl-tRNA synthetase family. Phe-tRNA synthetase alpha subunit type 1 subfamily. Tetramer of two alpha and two beta subunits. Mg(2+) is required as a cofactor.

It localises to the cytoplasm. It catalyses the reaction tRNA(Phe) + L-phenylalanine + ATP = L-phenylalanyl-tRNA(Phe) + AMP + diphosphate + H(+). In Persephonella marina (strain DSM 14350 / EX-H1), this protein is Phenylalanine--tRNA ligase alpha subunit.